Here is a 106-residue protein sequence, read N- to C-terminus: Small ribosomal subunit protein bS16 (106 aa).

This sequence belongs to the bacterial ribosomal protein bS16 family.

In Wolbachia pipientis wMel, this protein is Small ribosomal subunit protein bS16.